Reading from the N-terminus, the 390-residue chain is Sister chromatid cohesion protein DCC1 (390 aa).

Belongs to the DCC1 family. Component of the ctf18-RFC complex which consists of ctf18, ctf8, dscc1 and the RFC complex.

The protein resides in the nucleus. Functionally, loads pcna onto primed templates regulating velocity, spacing and restart activity of replication forks. May couple DNA replication to sister chromatid cohesion. The sequence is that of Sister chromatid cohesion protein DCC1 (dscc1) from Xenopus laevis (African clawed frog).